Reading from the N-terminus, the 431-residue chain is Glutamyl-tRNA(Gln) amidotransferase subunit A (431 aa).

Active-site charge relay system residues include K55 and S130. Residue S154 is the Acyl-ester intermediate of the active site.

Belongs to the amidase family. GatA subfamily. Heterotrimer of A, B and C subunits.

The catalysed reaction is L-glutamyl-tRNA(Gln) + L-glutamine + ATP + H2O = L-glutaminyl-tRNA(Gln) + L-glutamate + ADP + phosphate + H(+). Allows the formation of correctly charged Gln-tRNA(Gln) through the transamidation of misacylated Glu-tRNA(Gln) in organisms which lack glutaminyl-tRNA synthetase. The reaction takes place in the presence of glutamine and ATP through an activated gamma-phospho-Glu-tRNA(Gln). The chain is Glutamyl-tRNA(Gln) amidotransferase subunit A from Methanococcus maripaludis (strain DSM 14266 / JCM 13030 / NBRC 101832 / S2 / LL).